The sequence spans 106 residues: Large ribosomal subunit protein uL24 (106 aa).

The protein belongs to the universal ribosomal protein uL24 family. In terms of assembly, part of the 50S ribosomal subunit.

Functionally, one of two assembly initiator proteins, it binds directly to the 5'-end of the 23S rRNA, where it nucleates assembly of the 50S subunit. One of the proteins that surrounds the polypeptide exit tunnel on the outside of the subunit. The chain is Large ribosomal subunit protein uL24 from Bordetella avium (strain 197N).